Reading from the N-terminus, the 484-residue chain is Ribosome biogenesis protein YTM1 (484 aa).

The segment at 11–94 (VKVLFTTTEQ…EKTVTLQYVR (84 aa)) is ubiquitin-like (UBL) domain. WD repeat units lie at residues 121–160 (SSAG…LATS), 166–204 (GPLC…DHFS), 215–254 (GHRS…APEA), 289–329 (VHSR…VVST), 331–372 (TTSN…AATS), 378–418 (GHIN…PAAG), and 448–484 (GEGV…IISS).

This sequence belongs to the WD repeat WDR12/YTM1 family. As to quaternary structure, component of the NOP7 complex, composed of ERB1, NOP7 and YTM1. The complex is held together by ERB1, which interacts with NOP7 via its N-terminal domain and with YTM1 via a high-affinity interaction between the seven-bladed beta-propeller domains of the 2 proteins. The NOP7 complex associates with the 66S pre-ribosome. Interacts (via UBL domain) with MDN1 (via VWFA/MIDAS domain).

Its subcellular location is the nucleus. It localises to the nucleolus. The protein resides in the nucleoplasm. Component of the NOP7 complex, which is required for maturation of the 25S and 5.8S ribosomal RNAs and formation of the 60S ribosome. The polypeptide is Ribosome biogenesis protein YTM1 (Pyricularia oryzae (strain 70-15 / ATCC MYA-4617 / FGSC 8958) (Rice blast fungus)).